A 104-amino-acid chain; its full sequence is Type IV secretion system protein PtlB homolog (104 aa).

Residues I30 to L50 traverse the membrane as a helical segment.

Belongs to the virB3 family.

The protein localises to the cell membrane. The polypeptide is Type IV secretion system protein PtlB homolog (ptlB) (Bordetella bronchiseptica (strain ATCC BAA-588 / NCTC 13252 / RB50) (Alcaligenes bronchisepticus)).